Here is a 335-residue protein sequence, read N- to C-terminus: MKTLDEFIVDRQAEYPNAKGALTGILSSIRLVAKVIHRDINRAGLTNNILGFSGIDNVQGEHQMKLDLFAHNMMKQALMAREEVAGFASEEEENFVAFDTERGRNARYVILTDPLDGSSNIDVNVSVGTIFSIYRRVSPIGSPVTLEDFMQPGNRQVAAGYVVYGSSTMLVYTTGNGVNGFTYDPSLGTFCLSHENMQIPATGKIYSINEGQYLKFPMGVKKYIKYCQEEDAATNRPYTSRYIGSLVADFHRNLLKGGIYIYPHATNYPQGKLRLLYEGNPIAFLAEQAGGIASDGYNRVLDIQPSQLHQRVPLFVGSKQMVEKAQDFMHQFKED.

4 residues coordinate Mg(2+): E90, D113, L115, and D116. Residues D116–S119, N209, Y242, and K272 each bind substrate. E278 is a binding site for Mg(2+).

The protein belongs to the FBPase class 1 family. Homotetramer. It depends on Mg(2+) as a cofactor.

The protein localises to the cytoplasm. The enzyme catalyses beta-D-fructose 1,6-bisphosphate + H2O = beta-D-fructose 6-phosphate + phosphate. It functions in the pathway carbohydrate biosynthesis; gluconeogenesis. The polypeptide is Fructose-1,6-bisphosphatase class 1 (Mannheimia succiniciproducens (strain KCTC 0769BP / MBEL55E)).